Consider the following 82-residue polypeptide: UPF0248 protein Mevan_1298 (82 aa).

The protein belongs to the UPF0248 family.

This Methanococcus vannielii (strain ATCC 35089 / DSM 1224 / JCM 13029 / OCM 148 / SB) protein is UPF0248 protein Mevan_1298.